The following is a 254-amino-acid chain: MIRKAQFKKSEIEKFRLEIARSIVAGKLQNCRSVLSRTARKSKNESEKQDIKEAIGKIEKNISLLEKAESIESIRGYEGASAKTYFSVFDYCIIQQKEDFQFHKRTRRPPRSRTNALLSFLYSLLTNDCIAVCQAVGLDPYIGFLHDERPGRPSLALDMMEEFRPFIDRLVFTLINRKQIQVSDFLEKPGSVFFINDDSRKELIKSYQERKKEEIFHPWLNIKSTVGELPYLQARIFARTLRGDLKYYIPFIWK.

Mn(2+)-binding residues include glutamate 78, histidine 146, and glutamate 161.

Belongs to the CRISPR-associated endonuclease Cas1 family. Homodimer, forms a heterotetramer with a Cas2 homodimer. Requires Mg(2+) as cofactor. Mn(2+) is required as a cofactor.

Functionally, CRISPR (clustered regularly interspaced short palindromic repeat), is an adaptive immune system that provides protection against mobile genetic elements (viruses, transposable elements and conjugative plasmids). CRISPR clusters contain spacers, sequences complementary to antecedent mobile elements, and target invading nucleic acids. CRISPR clusters are transcribed and processed into CRISPR RNA (crRNA). Acts as a dsDNA endonuclease. Involved in the integration of spacer DNA into the CRISPR cassette. This is CRISPR-associated endonuclease Cas1 from Leptospira interrogans serogroup Icterohaemorrhagiae serovar Lai (strain 56601).